A 179-amino-acid polypeptide reads, in one-letter code: Large ribosomal subunit protein uL6 (179 aa).

This sequence belongs to the universal ribosomal protein uL6 family. Part of the 50S ribosomal subunit.

This protein binds to the 23S rRNA, and is important in its secondary structure. It is located near the subunit interface in the base of the L7/L12 stalk, and near the tRNA binding site of the peptidyltransferase center. The polypeptide is Large ribosomal subunit protein uL6 (Mycolicibacterium vanbaalenii (strain DSM 7251 / JCM 13017 / BCRC 16820 / KCTC 9966 / NRRL B-24157 / PYR-1) (Mycobacterium vanbaalenii)).